The chain runs to 178 residues: Small ribosomal subunit protein uS4 (178 aa).

In terms of domain architecture, S4 RNA-binding spans R104 to H166.

This sequence belongs to the universal ribosomal protein uS4 family. In terms of assembly, part of the 30S ribosomal subunit. Contacts protein S5. The interaction surface between S4 and S5 is involved in control of translational fidelity.

In terms of biological role, one of the primary rRNA binding proteins, it binds directly to 16S rRNA where it nucleates assembly of the body of the 30S subunit. With S5 and S12 plays an important role in translational accuracy. The chain is Small ribosomal subunit protein uS4 from Methanococcus vannielii (strain ATCC 35089 / DSM 1224 / JCM 13029 / OCM 148 / SB).